The sequence spans 551 residues: Cation/acetate symporter ActP (551 aa).

Helical transmembrane passes span 5–25 (HWSA…ALTG), 34–54 (IQAI…TYWA), 77–97 (GLAI…SALV), 104–124 (GLIY…LIAE), 150–170 (LSAC…MVGA), 184–204 (VAVV…GMLA), 207–227 (WVQI…AIMV), 263–283 (ISAL…PHIL), 304–324 (GFIG…ILLV), 356–376 (FFLG…VAGL), 406–426 (VSKI…ILFE), 430–450 (IAFM…PIII), 469–489 (LGLS…VTIL), and 498–518 (YEYP…FFSI).

This sequence belongs to the sodium:solute symporter (SSF) (TC 2.A.21) family.

The protein resides in the cell inner membrane. Transports acetate. The protein is Cation/acetate symporter ActP of Yersinia pestis bv. Antiqua (strain Antiqua).